The sequence spans 332 residues: 2,3-diketo-L-gulonate reductase (332 aa).

The Proton donor role is filled by His44. Residues 168-174 (ITMVDMS), 224-225 (WK), and 304-306 (GHE) contribute to the NAD(+) site.

This sequence belongs to the LDH2/MDH2 oxidoreductase family. DlgD subfamily. As to quaternary structure, homodimer.

The protein localises to the cytoplasm. It carries out the reaction 3-dehydro-L-gulonate + NAD(+) = 2,3-dioxo-L-gulonate + NADH + H(+). It catalyses the reaction 3-dehydro-L-gulonate + NADP(+) = 2,3-dioxo-L-gulonate + NADPH + H(+). Its function is as follows. Catalyzes the reduction of 2,3-diketo-L-gulonate in the presence of NADH, to form 3-keto-L-gulonate. The polypeptide is 2,3-diketo-L-gulonate reductase (Salmonella paratyphi B (strain ATCC BAA-1250 / SPB7)).